A 637-amino-acid polypeptide reads, in one-letter code: Biosynthetic arginine decarboxylase (637 aa).

K101 bears the N6-(pyridoxal phosphate)lysine mark. 286–296 (FDVGGGLAVDY) lines the substrate pocket.

The protein belongs to the Orn/Lys/Arg decarboxylase class-II family. SpeA subfamily. The cofactor is Mg(2+). It depends on pyridoxal 5'-phosphate as a cofactor.

It catalyses the reaction L-arginine + H(+) = agmatine + CO2. It functions in the pathway amine and polyamine biosynthesis; agmatine biosynthesis; agmatine from L-arginine: step 1/1. Its function is as follows. Catalyzes the biosynthesis of agmatine from arginine. The protein is Biosynthetic arginine decarboxylase of Shewanella piezotolerans (strain WP3 / JCM 13877).